A 158-amino-acid chain; its full sequence is Large ribosomal subunit protein uL15 (158 aa).

Disordered stretches follow at residues 1–53 (MRIH…FEGG) and 138–158 (ESAG…SNNE). A compositionally biased stretch (gly residues) spans 23–35 (ISAGQGASGGFGM). Over residues 145-158 (QDLSDTSNAPSNNE) the composition is skewed to polar residues.

It belongs to the universal ribosomal protein uL15 family. Part of the 50S ribosomal subunit.

Its function is as follows. Binds to the 23S rRNA. The polypeptide is Large ribosomal subunit protein uL15 (Crocosphaera subtropica (strain ATCC 51142 / BH68) (Cyanothece sp. (strain ATCC 51142))).